A 92-amino-acid chain; its full sequence is Large ribosomal subunit protein uL24 (92 aa).

This sequence belongs to the universal ribosomal protein uL24 family. As to quaternary structure, part of the 50S ribosomal subunit.

Its function is as follows. One of two assembly initiator proteins, it binds directly to the 5'-end of the 23S rRNA, where it nucleates assembly of the 50S subunit. Functionally, one of the proteins that surrounds the polypeptide exit tunnel on the outside of the subunit. This chain is Large ribosomal subunit protein uL24, found in Opitutus terrae (strain DSM 11246 / JCM 15787 / PB90-1).